A 404-amino-acid polypeptide reads, in one-letter code: MRNINVQLNPLSDIEKLQVELVERKGLGHPDYIADAVAEEASRKLSLYYLKKYGVILHHNLDKTLVVGGQATPRFKGGDVIQPIYIVVAGRATTEVKTESGIEQIPVGTIIIESVKEWIRNNFRYLDAEKHLIVDYKIGKGSTDLVGIFEAGKRVPLSNDTSFGVGFAPFTKLEKLVYETERHLNSKQFKAKLPEVGEDIKVMGLRRGNEVDLTIAMATISELIEDVNHYINVKEQAKNEILDLASKIAPDYDVRIYVNTGDKIDKNILYLTVTGTSAEHGDDGMTGRGNRGVGLITPMRPMSLEATAGKNPVNHVGKLYNVLANLIANKIAQEVKDVKFSQVQVLGQIGRPIDDPLIANVDVITYDGKLNDETKNEISGIVDEMLSSFNKLTELILEGKATLF.

139–144 contributes to the ATP binding site; the sequence is GKGSTD.

It belongs to the AdoMet synthase 2 family. The cofactor is Mg(2+).

The enzyme catalyses L-methionine + ATP + H2O = S-adenosyl-L-methionine + phosphate + diphosphate. The protein operates within amino-acid biosynthesis; S-adenosyl-L-methionine biosynthesis; S-adenosyl-L-methionine from L-methionine: step 1/1. Functionally, catalyzes the formation of S-adenosylmethionine from methionine and ATP. In Saccharolobus islandicus (strain L.S.2.15 / Lassen #1) (Sulfolobus islandicus), this protein is S-adenosylmethionine synthase.